The primary structure comprises 352 residues: Protein O-mannose kinase (352 aa).

The Cytoplasmic portion of the chain corresponds to Met-1 to Cys-16. Residues Leu-17–Met-37 traverse the membrane as a helical; Signal-anchor for type II membrane protein segment. The Lumenal portion of the chain corresponds to Tyr-38 to Leu-352. One can recognise a Protein kinase domain in the interval Val-82–Leu-352.

Belongs to the protein kinase superfamily. Ser/Thr protein kinase family. STKL subfamily.

Its subcellular location is the endoplasmic reticulum membrane. The enzyme catalyses 3-O-[beta-D-GalNAc-(1-&gt;3)-beta-D-GlcNAc-(1-&gt;4)-alpha-D-Man]-L-Thr-[protein] + ATP = 3-O-[beta-D-GalNAc-(1-&gt;3)-beta-D-GlcNAc-(1-&gt;4)-(O-6-P-alpha-D-Man)]-Thr-[protein] + ADP + H(+). In terms of biological role, protein O-mannose kinase that specifically mediates phosphorylation at the 6-position of an O-mannose of the trisaccharide (N-acetylgalactosamine (GalNAc)-beta-1,3-N-acetylglucosamine (GlcNAc)-beta-1,4-mannose) to generate phosphorylated O-mannosyl trisaccharide (N-acetylgalactosamine-beta-1,3-N-acetylglucosamine-beta-1,4-(phosphate-6-)mannose). Phosphorylated O-mannosyl trisaccharide is a carbohydrate structure present in alpha-dystroglycan (dag1), which is required for binding laminin G-like domain-containing extracellular proteins with high affinity. Only shows kinase activity when the GalNAc-beta-3-GlcNAc-beta-terminus is linked to the 4-position of O-mannose, suggesting that this disaccharide serves as the substrate recognition motif. This chain is Protein O-mannose kinase (pomk), found in Xenopus laevis (African clawed frog).